Here is a 350-residue protein sequence, read N- to C-terminus: Protein RecA (350 aa).

ATP is bound at residue 67 to 74; it reads GPESSGKT.

Belongs to the RecA family.

It is found in the cytoplasm. In terms of biological role, can catalyze the hydrolysis of ATP in the presence of single-stranded DNA, the ATP-dependent uptake of single-stranded DNA by duplex DNA, and the ATP-dependent hybridization of homologous single-stranded DNAs. It interacts with LexA causing its activation and leading to its autocatalytic cleavage. The sequence is that of Protein RecA from Baumannia cicadellinicola subsp. Homalodisca coagulata.